A 501-amino-acid polypeptide reads, in one-letter code: Protein disulfide isomerase-like 1-1 (501 aa).

Residues 1–23 (MAMRGFTLFSILVLSLCASSIRS) form the signal peptide. The Thioredoxin 1 domain maps to 24 to 141 (EETETKEFVL…IVTYLKKQSG (118 aa)). N39 carries an N-linked (GlcNAc...) asparagine glycan. Active-site nucleophile residues include C59 and C62. C59 and C62 are joined by a disulfide. The N-linked (GlcNAc...) asparagine glycan is linked to N275. The region spanning 354–482 (FKDGKIAPHK…FISFVDKNKD (129 aa)) is the Thioredoxin 2 domain. Residues C404 and C407 each act as nucleophile in the active site. The cysteines at positions 404 and 407 are disulfide-linked. The Prevents secretion from ER motif lies at 498 to 501 (KDEL).

This sequence belongs to the protein disulfide isomerase family. In terms of assembly, interacts with RD21A, At3g19390, At5g43060. Highly expressed in flowers, stems and immature seeds, and at lower levels in leaves and siliques (at protein level).

It is found in the endoplasmic reticulum lumen. Its subcellular location is the vacuole. The catalysed reaction is Catalyzes the rearrangement of -S-S- bonds in proteins.. Protein disulfide isomerase that associates with RD21A protease for trafficking from the ER through the Golgi to lytic and protein storage vacuoles of endothelial cells in developing seeds. Regulates the timing of programmed cell death (PCD) of the endothelial cells by chaperoning and inhibiting cysteine proteases during their trafficking to vacuoles. This Arabidopsis thaliana (Mouse-ear cress) protein is Protein disulfide isomerase-like 1-1 (PDIL1-1).